We begin with the raw amino-acid sequence, 240 residues long: Penton protein H240R (240 aa).

Belongs to the asfivirus H240R family.

Its subcellular location is the virion. In terms of biological role, forms the penton at the fivefold vertices of the icosahedral capsid. Together with the minor capsid proteins (p17, p49, and M1249L), forms a complicated network immediately below the outer capsid shell, stabilizing the whole capsid. This is Penton protein H240R from African swine fever virus (strain Badajoz 1971 Vero-adapted) (Ba71V).